Here is a 1081-residue protein sequence, read N- to C-terminus: DNA-directed RNA polymerase subunit beta (1081 aa).

Belongs to the RNA polymerase beta chain family. In terms of assembly, in plastids the minimal PEP RNA polymerase catalytic core is composed of four subunits: alpha, beta, beta', and beta''. When a (nuclear-encoded) sigma factor is associated with the core the holoenzyme is formed, which can initiate transcription.

It localises to the plastid. Its subcellular location is the chloroplast. The catalysed reaction is RNA(n) + a ribonucleoside 5'-triphosphate = RNA(n+1) + diphosphate. Its function is as follows. DNA-dependent RNA polymerase catalyzes the transcription of DNA into RNA using the four ribonucleoside triphosphates as substrates. This Cyanidium caldarium (Red alga) protein is DNA-directed RNA polymerase subunit beta.